A 296-amino-acid polypeptide reads, in one-letter code: 4-hydroxy-tetrahydrodipicolinate synthase (296 aa).

Position 50 (T50) interacts with pyruvate. The Proton donor/acceptor role is filled by Y138. K166 serves as the catalytic Schiff-base intermediate with substrate. I208 serves as a coordination point for pyruvate.

This sequence belongs to the DapA family. In terms of assembly, homotetramer; dimer of dimers.

It localises to the cytoplasm. It carries out the reaction L-aspartate 4-semialdehyde + pyruvate = (2S,4S)-4-hydroxy-2,3,4,5-tetrahydrodipicolinate + H2O + H(+). The protein operates within amino-acid biosynthesis; L-lysine biosynthesis via DAP pathway; (S)-tetrahydrodipicolinate from L-aspartate: step 3/4. Functionally, catalyzes the condensation of (S)-aspartate-beta-semialdehyde [(S)-ASA] and pyruvate to 4-hydroxy-tetrahydrodipicolinate (HTPA). This is 4-hydroxy-tetrahydrodipicolinate synthase from Ruthia magnifica subsp. Calyptogena magnifica.